The primary structure comprises 430 residues: Tyrosine--tRNA ligase (430 aa).

Tyr32 contributes to the L-tyrosine binding site. The 'HIGH' region motif lies at 37-46 (PTADSLHIGH). L-tyrosine-binding residues include Tyr172 and Gln176. Residues 232 to 236 (KFGKT) carry the 'KMSKS' region motif. Residue Lys235 coordinates ATP. Residues 362 to 430 (ISLVDLLADA…KKSYYLIIVE (69 aa)) form the S4 RNA-binding domain.

It belongs to the class-I aminoacyl-tRNA synthetase family. TyrS type 1 subfamily. As to quaternary structure, homodimer.

The protein resides in the cytoplasm. It carries out the reaction tRNA(Tyr) + L-tyrosine + ATP = L-tyrosyl-tRNA(Tyr) + AMP + diphosphate + H(+). Its function is as follows. Catalyzes the attachment of tyrosine to tRNA(Tyr) in a two-step reaction: tyrosine is first activated by ATP to form Tyr-AMP and then transferred to the acceptor end of tRNA(Tyr). The polypeptide is Tyrosine--tRNA ligase (Porphyromonas gingivalis (strain ATCC BAA-308 / W83)).